Consider the following 172-residue polypeptide: Large ribosomal subunit protein uL10 (172 aa).

Belongs to the universal ribosomal protein uL10 family. In terms of assembly, part of the ribosomal stalk of the 50S ribosomal subunit. The N-terminus interacts with L11 and the large rRNA to form the base of the stalk. The C-terminus forms an elongated spine to which L12 dimers bind in a sequential fashion forming a multimeric L10(L12)X complex.

Forms part of the ribosomal stalk, playing a central role in the interaction of the ribosome with GTP-bound translation factors. This is Large ribosomal subunit protein uL10 from Bradyrhizobium sp. (strain ORS 278).